The chain runs to 260 residues: Thiazole synthase (260 aa).

Lys-96 acts as the Schiff-base intermediate with DXP in catalysis. 1-deoxy-D-xylulose 5-phosphate is bound by residues Gly-157, 184-185 (AG), and 206-207 (NT).

The protein belongs to the ThiG family. As to quaternary structure, homotetramer. Forms heterodimers with either ThiH or ThiS.

The protein resides in the cytoplasm. It catalyses the reaction [ThiS sulfur-carrier protein]-C-terminal-Gly-aminoethanethioate + 2-iminoacetate + 1-deoxy-D-xylulose 5-phosphate = [ThiS sulfur-carrier protein]-C-terminal Gly-Gly + 2-[(2R,5Z)-2-carboxy-4-methylthiazol-5(2H)-ylidene]ethyl phosphate + 2 H2O + H(+). It participates in cofactor biosynthesis; thiamine diphosphate biosynthesis. In terms of biological role, catalyzes the rearrangement of 1-deoxy-D-xylulose 5-phosphate (DXP) to produce the thiazole phosphate moiety of thiamine. Sulfur is provided by the thiocarboxylate moiety of the carrier protein ThiS. In vitro, sulfur can be provided by H(2)S. The polypeptide is Thiazole synthase (Rhodopseudomonas palustris (strain BisB18)).